Here is a 291-residue protein sequence, read N- to C-terminus: Nucleotide-binding protein EUBREC_0697 (291 aa).

8 to 15 (GMSGAGKS) is an ATP binding site. 59-62 (DVRN) is a GTP binding site.

Belongs to the RapZ-like family.

Functionally, displays ATPase and GTPase activities. The chain is Nucleotide-binding protein EUBREC_0697 from Agathobacter rectalis (strain ATCC 33656 / DSM 3377 / JCM 17463 / KCTC 5835 / VPI 0990) (Eubacterium rectale).